Consider the following 347-residue polypeptide: MLKFIQNNREATALLAIVCLFVFLGALDSQYLSVQTLTMVFSSAQILMLLAIGATMVMLTRNIDVSVGSTTGMCAVLLGVMLNAGYSLPVACLATLILGIVAGFFNGVLVAWLKIPAIVATLGTLGLYRGIMLLWTGGKWIEGLPAGLKQLSAPVFLGISAIGWFTLVLALLMAWLLAKTAFGRNFYATGDNLQGARQLGVRTEMVRIMAFSLNGGMAALAGIVFASQIGFIPNQTGTGLEMKAIAACVLGGISLLGGSGTVIGAILGAYFLTQIDSVLVLLRIPAWWNDFIAGLVLLGVLVFDGRLRCALQRNLRRQKYARFISPPTPLQAEAKTHAQQNKNKEVA.

Helical transmembrane passes span 14–34 (LLAI…YLSV), 39–59 (MVFS…MVML), 72–92 (GMCA…PVAC), 93–113 (LATL…VAWL), 115–135 (IPAI…MLLW), 155–175 (VFLG…LMAW), 213–233 (LNGG…GFIP), 249–269 (VLGG…ILGA), and 284–304 (IPAW…LVFD).

This sequence belongs to the binding-protein-dependent transport system permease family. AraH/RbsC subfamily. The complex is composed of two ATP-binding proteins (LsrA), two transmembrane proteins (LsrC and LsrD) and a solute-binding protein (LsrB).

The protein localises to the cell inner membrane. Functionally, part of the ABC transporter complex LsrABCD involved in autoinducer 2 (AI-2) import. Probably responsible for the translocation of the substrate across the membrane. The chain is Autoinducer 2 import system permease protein LsrC (lsrC) from Salmonella typhi.